The chain runs to 364 residues: GTPase Obg (364 aa).

Residues 1–159 form the Obg domain; sequence MKFVDEAYID…KSLKLELKVL (159 aa). One can recognise an OBG-type G domain in the interval 160–334; the sequence is ADVGLLGMPN…LVKTIYQHVK (175 aa). Residues 166-173, 191-195, 213-216, 284-287, and 315-317 contribute to the GTP site; these read GMPNAGKS, FTTLH, DLPG, NKLD, and SAL. Mg(2+)-binding residues include S173 and T193. Residues 337 to 364 are disordered; the sequence is QKSEQPEEEVDPRFIELPPEPAKPASSD.

Belongs to the TRAFAC class OBG-HflX-like GTPase superfamily. OBG GTPase family. As to quaternary structure, monomer. It depends on Mg(2+) as a cofactor.

The protein localises to the cytoplasm. Functionally, an essential GTPase which binds GTP, GDP and possibly (p)ppGpp with moderate affinity, with high nucleotide exchange rates and a fairly low GTP hydrolysis rate. Plays a role in control of the cell cycle, stress response, ribosome biogenesis and in those bacteria that undergo differentiation, in morphogenesis control. The polypeptide is GTPase Obg (Polaromonas naphthalenivorans (strain CJ2)).